The following is an 871-amino-acid chain: Dual O-methyltransferase/FAD-dependent monooxygenase CTB3 (871 aa).

An O-methyltransferase region spans residues Met-1 to Gln-429. Residue Asp-279 participates in S-adenosyl-L-methionine binding. The active-site Proton acceptor is the His-331. An FAD-dependent monooxygenase region spans residues Thr-430–Phe-871. The FAD site is built by Glu-485, Arg-569, and Ala-806.

It in the C-terminal section; belongs to the paxM FAD-dependent monooxygenase family. This sequence in the N-terminal section; belongs to the class I-like SAM-binding methyltransferase superfamily. Cation-independent O-methyltransferase family. COMT subfamily.

The enzyme catalyses nor-toralactone + S-adenosyl-L-methionine = toralactone + S-adenosyl-L-homocysteine + H(+). The catalysed reaction is toralactone + NADH + O2 + H(+) = 1-(3,4,5-trihydroxy-7-methoxynaphthalen-2-yl)propan-2-one + CO2 + NAD(+). Its pathway is mycotoxin biosynthesis. Functionally, dual O-methyltransferase/FAD-dependent monooxygenase; part of the gene cluster that mediates the biosynthesis of cercosporin, a light-activated, non-host-selective toxin. The perylenequinone chromophore of cercosporin absorbs light energy to attain an electronically-activated triplet state and produces active oxygen species such as the hydroxyl radical, superoxide, hydrogen peroxide or singlet oxygen upon reaction with oxygen molecules. These reactive oxygen species cause damage to various cellular components including lipids, proteins and nucleic acids. The first step of cercosporin biosynthesis is performed by the polyketide synthase CTB1 which catalyzes the formation of nor-toralactone. The starter unit acyltransferase (SAT) domain of CTB1 initiates polyketide extension by the selective utilization of acetyl-CoA, which is elongated to the heptaketide in the beta-ketoacyl synthase (KS) domain by successive condensations with six malonyl units introduced by the malonyl acyltransferase (MAT) domain. The product template (PT) domain catalyzes C4-C9 and C2-C11 aldol cyclizations and dehydrations to a trihydroxynaphthalene, which is thought to be delivered to the thioesterase (TE) domain for product release. The bifunctional enzyme CTB3 then methylates nor-toralactone to toralactone before conducting an unusual oxidative aromatic ring opening. The O-methyltransferase CTB2 further methylates the nascent OH-6 of the CBT3 product, blocking further oxidation at this site before the reductase CTB6 reduces the 2-oxopropyl ketone at position C7, giving naphthalene. The FAD-dependent monooxygenase CTB5 in concert with the multicopper oxidase CTB12 are responsible for homodimerization of naphthalene with CTB7 installing the dioxepine moiety, finally producing cercosporin. The fasciclin domain-containing protein CTB11 might act with CTB5 and CTB12 whereas the roles of CTB9 and CTB10 have still to be elucidated. In Cercospora nicotianae (Barn spot disease fungus), this protein is Dual O-methyltransferase/FAD-dependent monooxygenase CTB3.